A 1011-amino-acid polypeptide reads, in one-letter code: Unconventional myosin ID (1011 aa).

Residues 7 to 690 (AGVQDFVLLD…TLFALEHQRN (684 aa)) enclose the Myosin motor domain. 100 to 107 (GESGAGKT) is a binding site for ATP. An actin-binding region spans residues 567–589 (MADLVVTLLKKEPFYVRCIKPND). IQ domains follow at residues 694–714 (PHIV…RNFK) and 716–736 (MKAA…SYVQ). One can recognise a TH1 domain in the interval 806 to 1007 (AGRRPYWGQA…EGNIIFEVPA (202 aa)).

It belongs to the TRAFAC class myosin-kinesin ATPase superfamily. Myosin family. As to quaternary structure, binds to F-actin. Interacts with arm. Interacts with shg. Interacts with ds (via intracellular region). In terms of tissue distribution, in the embryo, expressed in gastric caeca, midgut cells of the proventriculus, and in the mid and hindgut. In the larval gut brush border, expression is in the terminal web domain. In the adult gut brush border, expression remains in the web domain and has also moved into the microvilli. Also expressed at low levels in follicle cells during oogenesis.

It is found in the cytoplasm. Its subcellular location is the cell cortex. The protein localises to the cytoskeleton. It localises to the cell membrane. The protein resides in the cell junction. It is found in the adherens junction. Its subcellular location is the cell projection. In terms of biological role, unconventional myosin that functions as actin-based motor protein with ATPase activity. Binds to membranes enriched in phosphatidylinositol 4-5-bisphosphate, and can glide along actin filaments when anchored to a lipid bilayer. Generates left-right asymmetry at the level of single cells, organs and the whole body via its interaction with the actin cytoskeleton, both in the embryo and the adult. Normal left-right asymmetry of the larval midgut and hindgut requires expression in the embryonic hindgut epithelium during a critical time period, 10 to 12.75 hours after egg laying. This period corresponds to a late stage of germband retraction, and precedes left-right asymmetric morphogenesis. Expression in segment H1 of the imaginal ring is required at 0 to 24 hours after pupation for changes of cell shape and orientation in the H2 segment, which then gives rise to normal, dextral looping of the adult hindgut. Required during a critical period, 126-132 hours after egg laying, for normal, dextral rotation of the adult male genitalia. Has a double role by promoting dextral rotation in the posterior compartment of segment A8 of the male genital disk, and in repressing sinistral looping in the anterior compartment. This is Unconventional myosin ID from Drosophila melanogaster (Fruit fly).